An 87-amino-acid chain; its full sequence is RNA-binding protein Hfq (87 aa).

The Sm domain maps to 9 to 68 (DPFLNALRRERIPVSIYLVNGIKLQGQIESFDQFVILLKNTVNQMVYKHAISTVVPARPV). Positions 65-87 (ARPVSHHSGDRPASDRPAEKSEE) are disordered. Basic and acidic residues predominate over residues 71–87 (HSGDRPASDRPAEKSEE).

The protein belongs to the Hfq family.

In terms of biological role, RNA chaperone that binds small regulatory RNA (sRNAs) and mRNAs to facilitate mRNA translational regulation in response to envelope stress, environmental stress and changes in metabolite concentrations. Also binds with high specificity to tRNAs. Essential for virulence in the suckling mouse model of cholera pathogenesis. In Vibrio cholerae serotype O1 (strain ATCC 39315 / El Tor Inaba N16961), this protein is RNA-binding protein Hfq.